A 1621-amino-acid chain; its full sequence is Ferredoxin-dependent glutamate synthase, chloroplastic (1621 aa).

Residues 1–57 (MALQSAPKLLYSSPSPSVFSANERRVAFSDFVGLSKKRSRRRRIAGTFRNFPALSAV) constitute a chloroplast transit peptide. Residue C105 is the Nucleophile of the active site. The Glutamine amidotransferase type-2 domain occupies 105 to 504 (CGVGFIANLD…PGMMISVDLS (400 aa)). 1183–1240 (LSETHQTLISNGLRERVILRVDGGLKCGVDVMMAAAMGADEYGFGSLAMIATGCVMAR) contributes to the FMN binding site. Positions 1236, 1242, and 1247 each coordinate [3Fe-4S] cluster.

The protein belongs to the glutamate synthase family. In terms of assembly, interacts with ferredoxin. Interacts (via FMN-binding domain) with SQD1. Requires [3Fe-4S] cluster as cofactor. The cofactor is FMN. In terms of tissue distribution, expressed in young leaves. Not detected in mature leaves.

It is found in the plastid. Its subcellular location is the chloroplast stroma. It carries out the reaction 2 oxidized [2Fe-2S]-[ferredoxin] + 2 L-glutamate = L-glutamine + 2 reduced [2Fe-2S]-[ferredoxin] + 2-oxoglutarate + 2 H(+). The protein operates within amino-acid biosynthesis; L-glutamate biosynthesis via GLT pathway; L-glutamate from 2-oxoglutarate and L-glutamine (ferredoxin route): step 1/1. Its pathway is energy metabolism; nitrogen metabolism. Its activity is regulated as follows. Inhibited by N-bromosuccinimide, which is specific for modification of tryptophan residues probably involved in the electron transfer from ferredoxin. Its function is as follows. Catalyzes the reductive conversion of 2-oxoglutarate plus glutamine to two molecules of glutamate, using reduced ferredoxin as the electron donor. Contains one FMN but no FAD. The FMN-binding domain is also involved in the delivery of sulfite to the reaction center of SQD1. The chain is Ferredoxin-dependent glutamate synthase, chloroplastic from Spinacia oleracea (Spinach).